The sequence spans 118 residues: Iron-sulfur cluster insertion protein ErpA (118 aa).

Residues Cys46, Cys110, and Cys112 each coordinate iron-sulfur cluster.

The protein belongs to the HesB/IscA family. In terms of assembly, homodimer. Requires iron-sulfur cluster as cofactor.

Its function is as follows. Required for insertion of 4Fe-4S clusters for at least IspG. This Psychromonas ingrahamii (strain DSM 17664 / CCUG 51855 / 37) protein is Iron-sulfur cluster insertion protein ErpA.